The primary structure comprises 279 residues: tRNA uridine(34) hydroxylase (279 aa).

A Rhodanese domain is found at 126–221 (TKPGMHVIDT…YLQSVKGADS (96 aa)). Cys181 acts as the Cysteine persulfide intermediate in catalysis.

This sequence belongs to the TrhO family.

It catalyses the reaction uridine(34) in tRNA + AH2 + O2 = 5-hydroxyuridine(34) in tRNA + A + H2O. Catalyzes oxygen-dependent 5-hydroxyuridine (ho5U) modification at position 34 in tRNAs. In Anaplasma phagocytophilum (strain HZ), this protein is tRNA uridine(34) hydroxylase.